The chain runs to 271 residues: tRNA (guanine-N(1)-)-methyltransferase (271 aa).

Residues Gly120 and Ile145–Leu150 contribute to the S-adenosyl-L-methionine site.

This sequence belongs to the RNA methyltransferase TrmD family. In terms of assembly, homodimer.

Its subcellular location is the cytoplasm. The catalysed reaction is guanosine(37) in tRNA + S-adenosyl-L-methionine = N(1)-methylguanosine(37) in tRNA + S-adenosyl-L-homocysteine + H(+). Its function is as follows. Specifically methylates guanosine-37 in various tRNAs. The sequence is that of tRNA (guanine-N(1)-)-methyltransferase from Bifidobacterium longum (strain NCC 2705).